The chain runs to 1687 residues: Zinc finger protein 142 (1687 aa).

Disordered stretches follow at residues Met-1–Glu-23 and Thr-83–Gly-150. Basic and acidic residues predominate over residues Lys-125–Asp-140. At Ser-154 the chain carries Phosphoserine. 3 C2H2-type zinc fingers span residues His-163–His-185, His-219–His-242, and Tyr-253–His-275. A C2H2-type 4; atypical zinc finger spans residues Leu-286 to His-311. 10 consecutive C2H2-type zinc fingers follow at residues Val-316 to His-340, Phe-343 to His-366, Leu-372 to His-395, His-401 to His-423, His-429 to His-451, Tyr-457 to His-479, Tyr-485 to His-507, Leu-512 to His-536, Tyr-544 to His-567, and Phe-573 to His-596. Lys-594 participates in a covalent cross-link: Glycyl lysine isopeptide (Lys-Gly) (interchain with G-Cter in SUMO2). Disordered stretches follow at residues Glu-613 to Glu-690, Leu-704 to Pro-798, Lys-897 to Leu-935, Arg-947 to Glu-1014, and Gly-1052 to Asp-1092. The segment covering Pro-725 to Leu-739 has biased composition (low complexity). Residues Thr-1061–Asp-1075 show a composition bias toward polar residues. Positions Gly-1082–Asp-1092 are enriched in low complexity. 15 consecutive C2H2-type zinc fingers follow at residues Leu-1135–His-1158, Leu-1171–His-1194, His-1200–His-1222, Ile-1228–His-1251, His-1257–His-1280, Phe-1286–His-1309, Leu-1328–His-1351, Leu-1354–His-1377, His-1380–His-1403, Leu-1424–His-1446, Tyr-1452–His-1474, Tyr-1480–His-1502, Tyr-1508–His-1530, Tyr-1536–His-1559, and Phe-1565–His-1587. Lys-1193 is covalently cross-linked (Glycyl lysine isopeptide (Lys-Gly) (interchain with G-Cter in SUMO2)). Lys-1242 is covalently cross-linked (Glycyl lysine isopeptide (Lys-Gly) (interchain with G-Cter in SUMO2)). Residue Lys-1591 forms a Glycyl lysine isopeptide (Lys-Gly) (interchain with G-Cter in SUMO2) linkage. 2 C2H2-type zinc fingers span residues Tyr-1593–His-1615 and Phe-1621–His-1643. The tract at residues Lys-1638–Gly-1687 is disordered.

Belongs to the krueppel C2H2-type zinc-finger protein family.

Its subcellular location is the nucleus. Its function is as follows. May be involved in transcriptional regulation. In Homo sapiens (Human), this protein is Zinc finger protein 142.